The primary structure comprises 445 residues: Competence protein E (445 aa).

Residues 1 to 23 (MKKYFLKCGYFLVCFCLPLIVFA) form the signal peptide.

This sequence belongs to the bacterial secretin family. PilQ subfamily.

Its subcellular location is the cell outer membrane. Functionally, involved in transformation (genetic competence for DNA uptake). The polypeptide is Competence protein E (comE) (Haemophilus influenzae (strain ATCC 51907 / DSM 11121 / KW20 / Rd)).